Consider the following 136-residue polypeptide: Protein K5 (136 aa).

It belongs to the poxviridae K5 protein family.

The polypeptide is Protein K5 (Homo sapiens (Human)).